A 235-amino-acid chain; its full sequence is Large ribosomal subunit protein uL1 (235 aa).

This sequence belongs to the universal ribosomal protein uL1 family. Part of the 50S ribosomal subunit.

Functionally, binds directly to 23S rRNA. The L1 stalk is quite mobile in the ribosome, and is involved in E site tRNA release. Its function is as follows. Protein L1 is also a translational repressor protein, it controls the translation of the L11 operon by binding to its mRNA. The chain is Large ribosomal subunit protein uL1 from Symbiobacterium thermophilum (strain DSM 24528 / JCM 14929 / IAM 14863 / T).